Reading from the N-terminus, the 990-residue chain is Translation initiation factor IF-2 (990 aa).

Residues 92-402 (KKRTFVKRDD…QRDEHLQAAP (311 aa)) are disordered. 2 stretches are compositionally biased toward low complexity: residues 104-116 (EGAA…AAFA) and 131-151 (EAPA…AAPA). A compositionally biased stretch (basic and acidic residues) spans 158–201 (ELARREEQARHQAELIRRQEAELAAKRAAREAREKREREAEERA). Over residues 223–243 (TREQAAEATARNAAQLQARAK) the composition is skewed to low complexity. The segment covering 244-264 (AAAESKARSDEEAARAADLDA) has biased composition (basic and acidic residues). Composition is skewed to low complexity over residues 281 to 290 (ATPKKAVMVA) and 318 to 342 (PAVG…PGAG). 2 stretches are compositionally biased toward basic and acidic residues: residues 358 to 368 (PAKKKEIKTRG) and 386 to 398 (RRGD…DEHL). Positions 490 to 659 (PRAPVVTVMG…LLQADVMELK (170 aa)) constitute a tr-type G domain. The tract at residues 499–506 (GHVDHGKT) is G1. A GTP-binding site is contributed by 499 to 506 (GHVDHGKT). Residues 524–528 (GITQH) are G2. The tract at residues 545–548 (DTPG) is G3. GTP contacts are provided by residues 545-549 (DTPGH) and 599-602 (TKAD). A G4 region spans residues 599 to 602 (TKAD). The tract at residues 635-637 (SSK) is G5.

The protein belongs to the TRAFAC class translation factor GTPase superfamily. Classic translation factor GTPase family. IF-2 subfamily.

It localises to the cytoplasm. In terms of biological role, one of the essential components for the initiation of protein synthesis. Protects formylmethionyl-tRNA from spontaneous hydrolysis and promotes its binding to the 30S ribosomal subunits. Also involved in the hydrolysis of GTP during the formation of the 70S ribosomal complex. The polypeptide is Translation initiation factor IF-2 (Verminephrobacter eiseniae (strain EF01-2)).